Consider the following 795-residue polypeptide: Phenylalanine--tRNA ligase beta subunit (795 aa).

The tRNA-binding domain occupies 39 to 148 (AGSFHGVVVG…ADAPIGTDIR (110 aa)). The B5 domain maps to 401–476 (PKRATITLRR…RVYGYNNIPD (76 aa)). Positions 454, 460, 463, and 464 each coordinate Mg(2+). The region spanning 701-794 (SRFPANRRDI…LKERFQASLR (94 aa)) is the FDX-ACB domain.

This sequence belongs to the phenylalanyl-tRNA synthetase beta subunit family. Type 1 subfamily. As to quaternary structure, tetramer of two alpha and two beta subunits. The cofactor is Mg(2+).

It localises to the cytoplasm. The catalysed reaction is tRNA(Phe) + L-phenylalanine + ATP = L-phenylalanyl-tRNA(Phe) + AMP + diphosphate + H(+). The sequence is that of Phenylalanine--tRNA ligase beta subunit from Escherichia coli O157:H7.